Consider the following 369-residue polypeptide: RING-H2 finger protein ATL47 (369 aa).

The chain crosses the membrane as a helical span at residues 52–72 (IILFIIVLLSVIFFICSILHL). The RING-type; atypical zinc-finger motif lies at 144-186 (CAVCLCEFSEDDKLRLLPNCSHAFHIDCIDTWLLSNSTCPLCR). Positions 332-355 (NNHPSETNLVVGGSSSSSSYVCSG) are disordered. The span at 341–355 (VVGGSSSSSSYVCSG) shows a compositional bias: low complexity.

This sequence belongs to the RING-type zinc finger family. ATL subfamily.

The protein resides in the membrane. It catalyses the reaction S-ubiquitinyl-[E2 ubiquitin-conjugating enzyme]-L-cysteine + [acceptor protein]-L-lysine = [E2 ubiquitin-conjugating enzyme]-L-cysteine + N(6)-ubiquitinyl-[acceptor protein]-L-lysine.. Its pathway is protein modification; protein ubiquitination. This is RING-H2 finger protein ATL47 (ATL47) from Arabidopsis thaliana (Mouse-ear cress).